The primary structure comprises 353 residues: Magnesium-chelatase subunit ChlI (353 aa).

45-52 is a binding site for ATP; sequence GDRGTGKS.

The protein belongs to the Mg-chelatase subunits D/I family.

Its subcellular location is the plastid. It localises to the chloroplast. It catalyses the reaction protoporphyrin IX + Mg(2+) + ATP + H2O = Mg-protoporphyrin IX + ADP + phosphate + 3 H(+). The protein operates within porphyrin-containing compound metabolism; chlorophyll biosynthesis. In terms of biological role, involved in chlorophyll biosynthesis; introduces a magnesium ion into protoporphyrin IX to yield Mg-protoporphyrin IX. This Guillardia theta (Cryptophyte) protein is Magnesium-chelatase subunit ChlI (chlI).